The following is a 362-amino-acid chain: Protein-glutamate methylesterase/protein-glutamine glutaminase 1 (362 aa).

The 118-residue stretch at 10 to 127 (RVLVVDDSSF…ADAQRVFREE (118 aa)) folds into the Response regulatory domain. Position 61 is a 4-aspartylphosphate (Asp-61). Positions 163 to 357 (PRPSQALAGK…LPLTQIGSEI (195 aa)) constitute a CheB-type methylesterase domain. Active-site residues include Ser-181, His-208, and Asp-306.

This sequence belongs to the CheB family. Post-translationally, phosphorylated by CheA. Phosphorylation of the N-terminal regulatory domain activates the methylesterase activity.

It localises to the cytoplasm. The enzyme catalyses [protein]-L-glutamate 5-O-methyl ester + H2O = L-glutamyl-[protein] + methanol + H(+). It catalyses the reaction L-glutaminyl-[protein] + H2O = L-glutamyl-[protein] + NH4(+). Functionally, involved in chemotaxis. Part of a chemotaxis signal transduction system that modulates chemotaxis in response to various stimuli. Catalyzes the demethylation of specific methylglutamate residues introduced into the chemoreceptors (methyl-accepting chemotaxis proteins or MCP) by CheR. Also mediates the irreversible deamidation of specific glutamine residues to glutamic acid. This chain is Protein-glutamate methylesterase/protein-glutamine glutaminase 1, found in Geobacter sulfurreducens (strain ATCC 51573 / DSM 12127 / PCA).